The chain runs to 656 residues: Protein sly1 homolog (656 aa).

Repeat copies occupy residues 85–121 (DENLDRIQQDFSNGLYDIYHLNFLAPITRSKIENLAA), 203–245 (RNSA…FSFQ), 419–456 (LELLRDAEFGQPEDKLRLYIIYYICAQQLPEPELERLR), and 460–496 (QSAGCDLTALAYVQRWKSIMNRSPSISQATQYEGGGT). Residues 85-496 (DENLDRIQQD…QATQYEGGGT (412 aa)) are 4 X approximate repeats.

The protein belongs to the STXBP/unc-18/SEC1 family.

The protein localises to the cytoplasm. It is found in the membrane. Non-vital for development. The sequence is that of Protein sly1 homolog (Slh) from Drosophila virilis (Fruit fly).